The primary structure comprises 39 residues: uncharacterized protein (39 aa).

This is an uncharacterized protein from Dictyostelium discoideum (Social amoeba).